Consider the following 576-residue polypeptide: Hemagglutinin-neuraminidase (576 aa).

Over residues 1–10 (MDGDRGKRDS) the composition is skewed to basic and acidic residues. The interval 1 to 24 (MDGDRGKRDSYWSTSPSGSTTKLA) is disordered. Residues 1–37 (MDGDRGKRDSYWSTSPSGSTTKLASGWERSSKVDTWL) lie on the Intravirion side of the membrane. Positions 10–14 (SYWST) are incorporation in virion. The span at 11-23 (YWSTSPSGSTTKL) shows a compositional bias: polar residues. The chain crosses the membrane as a helical span at residues 38–58 (LILSFTQWALSIATVIICIII). The segment at 59–140 (SARQGYSTKE…RQELTQLCES (82 aa)) is involved in interaction with F protein. Residues 59–576 (SARQGYSTKE…SIPKLCKAES (518 aa)) lie on the Virion surface side of the membrane. Asn-77 carries an N-linked (GlcNAc...) asparagine; by host glycan. Disulfide bonds link Cys-192–Cys-216, Cys-258–Cys-271, Cys-357–Cys-469, and Cys-463–Cys-473. The interval 254–259 (NRKSCS) is involved in neuraminidase activity. Asn-499 and Asn-511 each carry an N-linked (GlcNAc...) asparagine; by host glycan. A disulfide bond links Cys-536 and Cys-545.

This sequence belongs to the paramyxoviruses hemagglutinin-neuraminidase family. As to quaternary structure, homotetramer; composed of disulfide-linked homodimers. Interacts with F protein trimer. Post-translationally, N-glycosylated; glycans consist of a mixture of high mannose-type oligosaccharides and of complex-type oligosaccharides.

The protein localises to the virion membrane. The protein resides in the host cell membrane. The catalysed reaction is Hydrolysis of alpha-(2-&gt;3)-, alpha-(2-&gt;6)-, alpha-(2-&gt;8)- glycosidic linkages of terminal sialic acid residues in oligosaccharides, glycoproteins, glycolipids, colominic acid and synthetic substrates.. Its function is as follows. Attaches the virus to sialic acid-containing cell receptors and thereby initiating infection. Binding of HN protein to the receptor induces a conformational change that allows the F protein to trigger virion/cell membranes fusion. In terms of biological role, neuraminidase activity ensures the efficient spread of the virus by dissociating the mature virions from the neuraminic acid containing glycoproteins. In Sendai virus (strain Harris) (SeV), this protein is Hemagglutinin-neuraminidase (HN).